The primary structure comprises 317 residues: Forkhead box protein B2 (317 aa).

The fork-head DNA-binding region spans 13-107 (KPPYSYISLT…ENGSFLRRRK (95 aa)).

As to expression, first expressed within the dorsolateral ectoderm, except for the organizer territory. During gastrulation, expressed in 2 ectodermal stripes adjacent to the dorsal midline. With the onset of neurulation, expression shifts first to the neural plate before settling on the bottom of the neural tube, on top of the notochord. Expression is then absent until stage 35, at which stage a pair of cells in the fourth rhombomere in the dorsolateral outer area of the rhombencephalon show expression. This is followed shortly afterwards by expression in a pair of cells in rhombomere 6 at the ventricular side of the rhombencephalon.

The protein resides in the nucleus. Its function is as follows. Transcription factor. The polypeptide is Forkhead box protein B2 (Xenopus laevis (African clawed frog)).